The chain runs to 170 residues: Protein SprT (170 aa).

A SprT-like domain is found at 23 to 164; that stretch reads QLARQHFSVE…CRQCGDKLKF (142 aa). Residue histidine 78 participates in Zn(2+) binding. Glutamate 79 is a catalytic residue. Histidine 82 provides a ligand contact to Zn(2+).

It belongs to the SprT family. The cofactor is Zn(2+).

It localises to the cytoplasm. The sequence is that of Protein SprT from Serratia proteamaculans (strain 568).